The sequence spans 391 residues: DNA repair protein NreA (391 aa).

The C4-type zinc finger occupies 6–20 (CAECKGKLLCGRSKC). The PIP motif motif lies at 382–389 (QTSLASFF).

The protein belongs to the Nre family. As to quaternary structure, interacts with the DNA polymerase sliding clamp (PCNA) via the PIP (PCNA-interacting peptide) motif.

Functionally, involved in DNA damage repair. The sequence is that of DNA repair protein NreA from Archaeoglobus fulgidus (strain ATCC 49558 / DSM 4304 / JCM 9628 / NBRC 100126 / VC-16).